The following is a 263-amino-acid chain: ABC transporter I family member 17 (263 aa).

The ABC transporter domain occupies 29–260; it reads IRVHDLTRVA…THPMAQRFLQ (232 aa). Residue 62–69 coordinates ATP; it reads GPSGSGKS.

The protein belongs to the ABC transporter superfamily. ABCI family.

The polypeptide is ABC transporter I family member 17 (ABCI17) (Arabidopsis thaliana (Mouse-ear cress)).